Here is a 500-residue protein sequence, read N- to C-terminus: Probable malate:quinone oxidoreductase (500 aa).

It belongs to the MQO family. FAD serves as cofactor.

It catalyses the reaction (S)-malate + a quinone = a quinol + oxaloacetate. It functions in the pathway carbohydrate metabolism; tricarboxylic acid cycle; oxaloacetate from (S)-malate (quinone route): step 1/1. This chain is Probable malate:quinone oxidoreductase, found in Bacillus cereus (strain AH187).